Here is a 93-residue protein sequence, read N- to C-terminus: UPF0223 protein SAG0995 (93 aa).

This sequence belongs to the UPF0223 family.

In Streptococcus agalactiae serotype V (strain ATCC BAA-611 / 2603 V/R), this protein is UPF0223 protein SAG0995.